The primary structure comprises 381 residues: MRSKKLWISLLFALTLIFTMAFSNMSVQAAGKSSTEKKYIVGFKQTMSAMSSAKKKDVISEKGGKVQKQFKYVNAAAATLDEKAVKELKKDPSVAYVEEDHIAHEYAQSVPYGISQIKAPALHSQGYTGSNVKVAVIDSGIDSSHPDLNVRGGASFVPSETNPYQDGSSHGTHVAGTIAALNNSIGVLGVSPSASLYAVKVLDSTGSGQYSWIINGIEWAISNNMDVINMSLGGPSGSTALKTVVDKAVSSGIVVAAAAGNEGSSGSSSTVGYPAKYPSTIAVGAVNSSNQRASFSSAGSELDVMAPGVSIQSTLPGGTYGAYNGTSMATPHVAGAAALILSKHPTWTNAQVRDRLESTATYLGNSFYYGKGLINVQAAAQ.

An N-terminal signal peptide occupies residues M1–A29. Residues A30 to Y106 constitute a propeptide that is removed on maturation. Positions K38–A103 constitute an Inhibitor I9 domain. Residue Q108 coordinates Ca(2+). Residues P111–A380 form the Peptidase S8 domain. The active-site Charge relay system is the D138. Residue D147 participates in Ca(2+) binding. Residue H170 is the Charge relay system of the active site. The Ca(2+) site is built by L181, N183, I185, V187, A275, Y277, and T280. The active-site Charge relay system is S327.

It belongs to the peptidase S8 family. Requires Ca(2+) as cofactor.

It localises to the secreted. The catalysed reaction is Hydrolysis of proteins with broad specificity for peptide bonds, and a preference for a large uncharged residue in P1. Hydrolyzes peptide amides.. Its function is as follows. Subtilisin is an extracellular alkaline serine protease, it catalyzes the hydrolysis of proteins and peptide amides. This is Subtilisin J (aprJ) from Geobacillus stearothermophilus (Bacillus stearothermophilus).